Consider the following 224-residue polypeptide: MKKAVVLLSGGMDSAAVIALAQEQGFAVHALSVRYGQRHTSELDAAARVAAAQGVVAHKVVDVDLRSIGGSALTADIDVPEAGGAGIPVTYVPARNTIMLSLALGWAEVVGANDLFCGVNAVDYSGYPDCRPEFVRAFEVLANLATKAGVEGAGLRVHAPLQFLSKADIVRAGVRLGVDFGLTVSCYNADADGRACGHCDACRLRAAGFADAGVPDPTHYAISS.

Residue 8–18 (LSGGMDSAAVI) coordinates ATP. Residues C186, C196, C199, and C202 each coordinate Zn(2+).

This sequence belongs to the QueC family. The cofactor is Zn(2+).

The enzyme catalyses 7-carboxy-7-deazaguanine + NH4(+) + ATP = 7-cyano-7-deazaguanine + ADP + phosphate + H2O + H(+). It functions in the pathway purine metabolism; 7-cyano-7-deazaguanine biosynthesis. Catalyzes the ATP-dependent conversion of 7-carboxy-7-deazaguanine (CDG) to 7-cyano-7-deazaguanine (preQ(0)). The sequence is that of 7-cyano-7-deazaguanine synthase from Xanthomonas campestris pv. campestris (strain 8004).